A 108-amino-acid chain; its full sequence is uncharacterized protein (108 aa).

2 helical membrane-spanning segments follow: residues 51 to 71 (VFAA…FCFL) and 86 to 106 (PLST…KSLL).

The protein localises to the membrane. This is an uncharacterized protein from Saccharomyces cerevisiae (strain ATCC 204508 / S288c) (Baker's yeast).